Here is a 220-residue protein sequence, read N- to C-terminus: Phosphoenolpyruvate guanylyltransferase (220 aa).

Phosphoenolpyruvate-binding residues include threonine 154, glycine 169, and serine 172.

This sequence belongs to the CofC family.

It carries out the reaction phosphoenolpyruvate + GTP + H(+) = enolpyruvoyl-2-diphospho-5'-guanosine + diphosphate. It functions in the pathway cofactor biosynthesis; coenzyme F420 biosynthesis. In terms of biological role, guanylyltransferase that catalyzes the activation of phosphoenolpyruvate (PEP) as enolpyruvoyl-2-diphospho-5'-guanosine, via the condensation of PEP with GTP. It is involved in the biosynthesis of coenzyme F420, a hydride carrier cofactor. This Mycolicibacterium paratuberculosis (strain ATCC BAA-968 / K-10) (Mycobacterium paratuberculosis) protein is Phosphoenolpyruvate guanylyltransferase.